Consider the following 548-residue polypeptide: MAVSERRGLGRGSPAEWGPWLLLLLLLGGSSGRIHRLTLTGEKRADIQLNSFGFYTNGSLEVNLSLLRLGRQDTEEKAPLVGFSLTRVRSGSIRSYSNRDSHECPLRKNSSSLLVLFLINTKDLEVQVRKYGEQKKLFISAGLLPESPSKPGLPKSEHMVTPKVDHAGTTAAPDKAKSKPTGLQGDRQGVSGKDQELVLGLGHLNNSYNFSFHVVIGSRAEEGQYNLNFHNCDNSVPGREQPFDITVMIREKNPEGYLSAAEIPLFKLYMVMSACFLGAGIFWVSILCKNTYNVFKIHWLMAALTFTKSVSLLFHSINYYFINSQGHPIEGLAVMHYITHLLKGALLFITIALIGSGWAFVKYVLSDKEKKIFGIVIPLQVLANVAYIVMESREEGASDYGIWKEILFLVDLICCGTILFPVVWSIRHLQDASGTDGKVAVNLAKLKLFRHYYVMVICYIYFTRIIAILLRAVVPFQWQWLYQLLVEGSTLAFFVLTGYKFQPARDNPYLQLPQEDEEGMQIEQVMTDSGFREGLSKVNKTASGRELL.

The signal sequence occupies residues 1–32 (MAVSERRGLGRGSPAEWGPWLLLLLLLGGSSG). 3 N-linked (GlcNAc...) asparagine glycosylation sites follow: N57, N63, and N109. The segment at 165–190 (DHAGTTAAPDKAKSKPTGLQGDRQGV) is disordered. N-linked (GlcNAc...) asparagine glycosylation is found at N205 and N209. 7 helical membrane-spanning segments follow: residues 268–288 (LYMV…SILC), 297–317 (IHWL…FHSI), 341–361 (LLKG…WAFV), 372–392 (IFGI…VMES), 406–426 (ILFL…VWSI), 454–474 (VMVI…RAVV), and 478–498 (WQWL…VLTG). N539 carries N-linked (GlcNAc...) asparagine glycosylation.

The protein belongs to the LU7TM family.

It is found in the golgi apparatus. The protein resides in the cis-Golgi network membrane. It localises to the trans-Golgi network membrane. The protein localises to the golgi apparatus membrane. Its function is as follows. May play a role in intracellular immune modulation by activating NF-kappaB response and attenuating Toll-like-receptor response. This Bos taurus (Bovine) protein is Protein GPR108 (GPR108).